Here is a 217-residue protein sequence, read N- to C-terminus: Probable transaldolase (217 aa).

Catalysis depends on Lys-83, which acts as the Schiff-base intermediate with substrate.

It belongs to the transaldolase family. Type 3B subfamily.

Its subcellular location is the cytoplasm. The enzyme catalyses D-sedoheptulose 7-phosphate + D-glyceraldehyde 3-phosphate = D-erythrose 4-phosphate + beta-D-fructose 6-phosphate. The protein operates within carbohydrate degradation; pentose phosphate pathway; D-glyceraldehyde 3-phosphate and beta-D-fructose 6-phosphate from D-ribose 5-phosphate and D-xylulose 5-phosphate (non-oxidative stage): step 2/3. Transaldolase is important for the balance of metabolites in the pentose-phosphate pathway. In Sinorhizobium medicae (strain WSM419) (Ensifer medicae), this protein is Probable transaldolase.